The sequence spans 579 residues: Pre-mRNA-processing protein 45 (579 aa).

4 disordered regions span residues 1–64 (MTSV…GWRP), 218–254 (QQDP…LTAE), 343–414 (QKAR…TERR), and 521–579 (AAEA…VDDD). Residues 234–245 (RGPPSPPPPIMH) are compositionally biased toward pro residues. Positions 343-359 (QKAREERAASNRRDSRA) are enriched in basic and acidic residues. A compositionally biased stretch (low complexity) spans 366 to 379 (ASRSPSAYSRSATP). Basic and acidic residues-rich tracts occupy residues 386 to 414 (ARER…TERR), 521 to 538 (AAEA…KDTT), and 563 to 579 (EVER…VDDD).

This sequence belongs to the SNW family. Associated with the spliceosome.

The protein localises to the nucleus. Involved in pre-mRNA splicing. In Aspergillus fumigatus (strain ATCC MYA-4609 / CBS 101355 / FGSC A1100 / Af293) (Neosartorya fumigata), this protein is Pre-mRNA-processing protein 45 (prp45).